The primary structure comprises 330 residues: MTGDAPQSAPQHRGSPAPAHVPVMLERVVELLAPALQQPGAIAVDGTLGLGGHAEALLRAHPGLRLVGVDRDTTALERARQRLAPYADRIDLVHAVYSDIPRILDELGIDRVHGLLFDLGVSSPQLDEAERGFAYSYDAPLDMRMDRTQERTAADIVNTYPASELTRIFRVYGEERFAARIAQAIVRQRAKEPVRTTGVLADLVRSAIPAAARRSGGHPAKRAFQALRIEVNSELSILERALPAALSRLAVAGRIVVLSYHSLEDRITKRVLTELSTDSTPPGLPVPLPDRQPELRLLTRGAELPTEQETAANPRAASARLRAAERTREP.

Residues 51–53 (GGH), Asp70, Asp118, and Gln125 contribute to the S-adenosyl-L-methionine site. The disordered stretch occupies residues 276–330 (STDSTPPGLPVPLPDRQPELRLLTRGAELPTEQETAANPRAASARLRAAERTREP). The span at 311 to 321 (AANPRAASARL) shows a compositional bias: low complexity.

It belongs to the methyltransferase superfamily. RsmH family.

The protein resides in the cytoplasm. The enzyme catalyses cytidine(1402) in 16S rRNA + S-adenosyl-L-methionine = N(4)-methylcytidine(1402) in 16S rRNA + S-adenosyl-L-homocysteine + H(+). Specifically methylates the N4 position of cytidine in position 1402 (C1402) of 16S rRNA. In Thermobifida fusca (strain YX), this protein is Ribosomal RNA small subunit methyltransferase H.